The following is a 152-amino-acid chain: uncharacterized protein (152 aa).

An HTH marR-type domain is found at 3–143 (EQKLCQAINL…IIEIFTILKS (141 aa)). The H-T-H motif DNA-binding region spans 55 to 78 (PGSLAMYQNVHKSAISNRLKKLLE).

This is an uncharacterized protein from Bacillus subtilis (strain 168).